Consider the following 262-residue polypeptide: Indole-3-glycerol phosphate synthase (262 aa).

Belongs to the TrpC family.

It catalyses the reaction 1-(2-carboxyphenylamino)-1-deoxy-D-ribulose 5-phosphate + H(+) = (1S,2R)-1-C-(indol-3-yl)glycerol 3-phosphate + CO2 + H2O. It participates in amino-acid biosynthesis; L-tryptophan biosynthesis; L-tryptophan from chorismate: step 4/5. The polypeptide is Indole-3-glycerol phosphate synthase (Bordetella bronchiseptica (strain ATCC BAA-588 / NCTC 13252 / RB50) (Alcaligenes bronchisepticus)).